A 711-amino-acid chain; its full sequence is Constitutive ornithine decarboxylase (711 aa).

N6-(pyridoxal phosphate)lysine is present on lysine 347.

The protein belongs to the Orn/Lys/Arg decarboxylase class-I family. The cofactor is pyridoxal 5'-phosphate.

The enzyme catalyses L-ornithine + H(+) = putrescine + CO2. It participates in amine and polyamine biosynthesis; putrescine biosynthesis via L-ornithine pathway; putrescine from L-ornithine: step 1/1. This is Constitutive ornithine decarboxylase (speC) from Escherichia coli (strain K12).